Reading from the N-terminus, the 157-residue chain is Transcriptional repressor NrdR (157 aa).

A disordered region spans residues Met-1–Gly-22. Residues Cys-3–Cys-34 fold into a zinc finger. Over residues Ser-8–Arg-17 the composition is skewed to polar residues. An ATP-cone domain is found at Leu-49–Arg-136.

It belongs to the NrdR family. It depends on Zn(2+) as a cofactor.

Its function is as follows. Negatively regulates transcription of bacterial ribonucleotide reductase nrd genes and operons by binding to NrdR-boxes. This Deinococcus radiodurans (strain ATCC 13939 / DSM 20539 / JCM 16871 / CCUG 27074 / LMG 4051 / NBRC 15346 / NCIMB 9279 / VKM B-1422 / R1) protein is Transcriptional repressor NrdR.